Consider the following 106-residue polypeptide: Urease subunit beta (106 aa).

It belongs to the urease beta subunit family. Heterotrimer of UreA (gamma), UreB (beta) and UreC (alpha) subunits. Three heterotrimers associate to form the active enzyme.

It is found in the cytoplasm. It carries out the reaction urea + 2 H2O + H(+) = hydrogencarbonate + 2 NH4(+). Its pathway is nitrogen metabolism; urea degradation; CO(2) and NH(3) from urea (urease route): step 1/1. This is Urease subunit beta from Synechococcus sp. (strain CC9311).